The following is a 233-amino-acid chain: Ribose-5-phosphate isomerase A (233 aa).

Residues 28 to 31 (SGST), 83 to 86 (DGAD), and 96 to 99 (KGGG) contribute to the substrate site. Glu105 serves as the catalytic Proton acceptor. Lys123 is a binding site for substrate.

Belongs to the ribose 5-phosphate isomerase family. As to quaternary structure, homodimer.

The enzyme catalyses aldehydo-D-ribose 5-phosphate = D-ribulose 5-phosphate. Its pathway is carbohydrate degradation; pentose phosphate pathway; D-ribose 5-phosphate from D-ribulose 5-phosphate (non-oxidative stage): step 1/1. Catalyzes the reversible conversion of ribose-5-phosphate to ribulose 5-phosphate. The polypeptide is Ribose-5-phosphate isomerase A (Maricaulis maris (strain MCS10) (Caulobacter maris)).